The sequence spans 335 residues: Probable UDP-N-acetylglucosamine pyrophosphorylase (335 aa).

The Substrate binding signature appears at 45–48 (LSGG). Residues 45–48 (LSGG), Lys-59, Gln-120, and Gly-145 contribute to the UTP site. Asn-146 lines the substrate pocket. Asp-170 is a binding site for UTP. The Substrate binding motif lies at 218-219 (EY). Lys-278 contacts UTP. Lys-308 is a binding site for substrate.

The protein belongs to the UDPGP type 1 family.

The protein localises to the cytoplasm. It carries out the reaction N-acetyl-alpha-D-glucosamine 1-phosphate + UTP + H(+) = UDP-N-acetyl-alpha-D-glucosamine + diphosphate. The protein operates within nucleotide-sugar biosynthesis; UDP-N-acetyl-alpha-D-glucosamine biosynthesis; UDP-N-acetyl-alpha-D-glucosamine from N-acetyl-alpha-D-glucosamine 1-phosphate: step 1/1. The polypeptide is Probable UDP-N-acetylglucosamine pyrophosphorylase (UAP1) (Encephalitozoon cuniculi (strain GB-M1) (Microsporidian parasite)).